Reading from the N-terminus, the 406-residue chain is Homocitrate synthase AksA (406 aa).

Positions 32–285 (IYIYDTTLRD…DLGLNLEVLP (254 aa)) constitute a Pyruvate carboxyltransferase domain.

Belongs to the alpha-IPM synthase/homocitrate synthase family.

It carries out the reaction acetyl-CoA + 2-oxoglutarate + H2O = (2R)-homocitrate + CoA + H(+). The enzyme catalyses 2-oxoadipate + acetyl-CoA + H2O = (R)-dihomocitrate + CoA + H(+). It catalyses the reaction 2-oxoheptanedioate + acetyl-CoA + H2O = (R)-trihomocitrate + CoA + H(+). It participates in organic acid metabolism; 2-oxosuberate biosynthesis. Catalyzes the condensation of alpha-ketoglutarate and acetyl-CoA to form (R)-homocitrate. Can also catalyze the condensation of alpha-ketoadipate with acetyl-CoA to form (R)-homo(2)citrate, and the condensation of alpha-ketopimelate with acetyl-CoA to form (R)-homo(3)citrate. These reactions are part of the biosynthesis pathway of coenzyme B and biotin. In Methanocaldococcus jannaschii (strain ATCC 43067 / DSM 2661 / JAL-1 / JCM 10045 / NBRC 100440) (Methanococcus jannaschii), this protein is Homocitrate synthase AksA (aksA).